Here is a 22-residue protein sequence, read N- to C-terminus: Hemoglobinase-like protein 2 (22 aa).

It belongs to the peptidase C13 family.

It carries out the reaction Hydrolysis of proteins and small molecule substrates at -Asn-|-Xaa- bonds.. The protein is Hemoglobinase-like protein 2 of Fasciola hepatica (Liver fluke).